The following is a 308-amino-acid chain: Putative lipid kinase SH2167 (308 aa).

One can recognise a DAGKc domain in the interval 1-139; that stretch reads MGQKFNHGVL…YDVMKVNGTY (139 aa). ATP is bound by residues Ser-44, 74–80, and Thr-101; that span reads GDGTVNE. Mg(2+)-binding residues include Ser-220, Asp-223, and Lys-225. Glu-281 functions as the Proton acceptor in the catalytic mechanism.

It belongs to the diacylglycerol/lipid kinase family. It depends on Mg(2+) as a cofactor.

In terms of biological role, may catalyze the ATP-dependent phosphorylation of lipids other than diacylglycerol (DAG). This chain is Putative lipid kinase SH2167, found in Staphylococcus haemolyticus (strain JCSC1435).